The sequence spans 300 residues: MKRPDYRTLQALDAVIRERGFERAAQKLCITQSAVSQRIKQLENLFGQPLLVRTVPPRPTEQGQKLLALLHQVELLEEQWLGNEQGTDTPLLLSLAVNADSLATWLLPALHPVLADLPIRLNIQVEDETRTQEQLRRGEVVGAVSIQPQPLPSCLIDKLGALDYLFVASPEFATRHFPNGVTRSALLKAPAVAFDHLDDMHQAFLQQNFELSPGSVPCHIVNSSEAFVQLAKQGSTCCMIPHLQIDQELKNGELIDLTPGLCQRRMLYWHRFAPESRTMKKVTDALLKLGRQMLRQDDIN.

One can recognise an HTH lysR-type domain in the interval 4–60 (PDYRTLQALDAVIRERGFERAAQKLCITQSAVSQRIKQLENLFGQPLLVRTVPPRPT). Positions 21 to 40 (FERAAQKLCITQSAVSQRIK) form a DNA-binding region, H-T-H motif.

Belongs to the LysR transcriptional regulatory family. As to quaternary structure, homodimer.

Controls the transcription of genes involved in arginine and lysine metabolism. This Photorhabdus laumondii subsp. laumondii (strain DSM 15139 / CIP 105565 / TT01) (Photorhabdus luminescens subsp. laumondii) protein is HTH-type transcriptional regulator ArgP.